A 328-amino-acid polypeptide reads, in one-letter code: Malate dehydrogenase (328 aa).

12–18 (GAAGQIG) is an NAD(+) binding site. Arginine 95 and arginine 101 together coordinate substrate. Residues asparagine 108, glutamine 115, and 132–134 (VGN) contribute to the NAD(+) site. Residues asparagine 134 and arginine 165 each coordinate substrate. Catalysis depends on histidine 190, which acts as the Proton acceptor.

It belongs to the LDH/MDH superfamily. MDH type 2 family.

It carries out the reaction (S)-malate + NAD(+) = oxaloacetate + NADH + H(+). Catalyzes the reversible oxidation of malate to oxaloacetate. The polypeptide is Malate dehydrogenase (Delftia acidovorans (strain DSM 14801 / SPH-1)).